Here is a 666-residue protein sequence, read N- to C-terminus: tRNA 5-methylaminomethyl-2-thiouridine biosynthesis bifunctional protein MnmC (666 aa).

The segment at 1 to 245 (MKQYAIQPAT…KREMLCGVME (245 aa)) is tRNA (mnm(5)s(2)U34)-methyltransferase. The FAD-dependent cmnm(5)s(2)U34 oxidoreductase stretch occupies residues 270 to 666 (IGGGIASALL…RKLLKGKAVK (397 aa)).

It in the N-terminal section; belongs to the methyltransferase superfamily. tRNA (mnm(5)s(2)U34)-methyltransferase family. In the C-terminal section; belongs to the DAO family. FAD is required as a cofactor.

The protein localises to the cytoplasm. It carries out the reaction 5-aminomethyl-2-thiouridine(34) in tRNA + S-adenosyl-L-methionine = 5-methylaminomethyl-2-thiouridine(34) in tRNA + S-adenosyl-L-homocysteine + H(+). Its function is as follows. Catalyzes the last two steps in the biosynthesis of 5-methylaminomethyl-2-thiouridine (mnm(5)s(2)U) at the wobble position (U34) in tRNA. Catalyzes the FAD-dependent demodification of cmnm(5)s(2)U34 to nm(5)s(2)U34, followed by the transfer of a methyl group from S-adenosyl-L-methionine to nm(5)s(2)U34, to form mnm(5)s(2)U34. This is tRNA 5-methylaminomethyl-2-thiouridine biosynthesis bifunctional protein MnmC from Salmonella paratyphi A (strain ATCC 9150 / SARB42).